A 384-amino-acid chain; its full sequence is WD repeat-containing protein 74 (384 aa).

WD repeat units follow at residues 40-80 (RREE…FLSQ), 83-122 (CPGG…ASSD), 128-168 (KVGP…EPVF), 179-220 (DLRV…RRPV), 224-266 (TYGE…GCLK), and 267-306 (GLAG…GLEH). At Ser-214 the chain carries Phosphoserine. Lys-311 carries the N6-methyllysine modification. A required for nucleolar and nuclear location region spans residues 320-384 (SGRDNWEDEP…KKKRPGSTSP (65 aa)). The interval 323-384 (DNWEDEPQEP…KKKRPGSTSP (62 aa)) is disordered. The segment covering 371 to 384 (QRRKKKKRPGSTSP) has biased composition (basic residues).

As to quaternary structure, isoform 1 interacts (through WDR repeats) with NVL; the interaction is independent of RNA or pre-60S ribosome particles. Isoform 2 does not interact with NVL. Interacts with MTREX; the interaction dissociation in a late stage of rRNA synthesis is required for appropriate maturation of pre-60S particles and depends on the ATPase activity of NVL.

It is found in the nucleus. The protein resides in the nucleolus. In terms of biological role, regulatory protein of the MTREX-exosome complex involved in the synthesis of the 60S ribosomal subunit. Participates in an early cleavage of the pre-rRNA processing pathway in cooperation with NVL. Required for blastocyst formation, is necessary for RNA transcription, processing and/or stability during preimplantation development. This chain is WD repeat-containing protein 74 (Wdr74), found in Mus musculus (Mouse).